Here is a 219-residue protein sequence, read N- to C-terminus: Putative ankyrin repeat protein BB_0399 (219 aa).

ANK repeat units follow at residues 104-133, 137-166, and 170-199; these read YKISPISISIINNEFEITKILIDYGISLNQ, TGYSPIFWAIYTNNEKIFEFLKESGADLSF, and NRKTPMQAAIETENIKLIKSLEKKKIYIDD.

This chain is Putative ankyrin repeat protein BB_0399, found in Borreliella burgdorferi (strain ATCC 35210 / DSM 4680 / CIP 102532 / B31) (Borrelia burgdorferi).